The chain runs to 202 residues: MRYWYLRLAVFLGALAVPAWWLYQAWIFALGPDPGKTLVDRLGLGALVLLLLTLAMTPLQKLSGWPGWIAVRRQLGLWCFTYVLLHLSAYYVFILGLDWGQLGIELSKRPYIIVGMLGFVCLFLLAITSNRFAMRKLGSRWKKLHRLVYLILGLGLLHMLWVVRADLEEWTLYAVVGASLMLLRLPSIARRLPRLRTRHGVS.

A run of 6 helical transmembrane segments spans residues 8–28 (LAVF…AWIF), 42–62 (LGLG…LQKL), 75–95 (LGLW…VFIL), 110–130 (PYII…ITSN), 147–167 (LVYL…RADL), and 169–189 (EWTL…PSIA).

It belongs to the MsrQ family. Heterodimer of a catalytic subunit (MsrP) and a heme-binding subunit (MsrQ). It depends on FMN as a cofactor. Heme b is required as a cofactor.

The protein resides in the cell inner membrane. In terms of biological role, part of the MsrPQ system that repairs oxidized periplasmic proteins containing methionine sulfoxide residues (Met-O), using respiratory chain electrons. Thus protects these proteins from oxidative-stress damage caused by reactive species of oxygen and chlorine generated by the host defense mechanisms. MsrPQ is essential for the maintenance of envelope integrity under bleach stress, rescuing a wide series of structurally unrelated periplasmic proteins from methionine oxidation. MsrQ provides electrons for reduction to the reductase catalytic subunit MsrP, using the quinone pool of the respiratory chain. This is Protein-methionine-sulfoxide reductase heme-binding subunit MsrQ from Pseudomonas aeruginosa (strain ATCC 15692 / DSM 22644 / CIP 104116 / JCM 14847 / LMG 12228 / 1C / PRS 101 / PAO1).